The primary structure comprises 30 residues: Proteinase inhibitor CeKI (30 aa).

It belongs to the protease inhibitor I3 (leguminous Kunitz-type inhibitor) family.

Potent inhibitor of serine proteases plasma kallikrein, plasmin and coagulation factor XIIa. Weak inhibitor of serine proteases trypsin and coagulation factor Xa. Does not inhibit the serine proteases chymotrypsin, elastase or thrombin. Inhibits kinin release from HMW-kininogen by kallikrein in vitro. The protein is Proteinase inhibitor CeKI of Paubrasilia echinata (Pau Brasil).